Here is a 422-residue protein sequence, read N- to C-terminus: MLSIKFINDNRDYVRKALENRNFDVSVFDTLLSYLDKRGAAMHDAQIKRSELSKLSRQIGSFKDDKAKMNELKLQAANLKKDVVELEKNADEFDQKAYEIIISIPNISLDSVPVGKDENDNQVINTHDNLGRKLVSNVLPHYEIGNKLDIFDFERAVKLSGSRFVVFKGAGAKLARALQNFMLDLHTANGYKEYSVPVLVKPEILFGTGQLPKFKDDLFFMEQTNMYLIPTAEVPLTNLYNNEIIDLSQPVRLTGFTECFRSEAGSGGKDMKGIIRSHQFKKVELVKITSEEDWEFEFKQMLEQAKLVLEELELPYRELQLCTGDLGFSSRTTVDLEVWLPSELKYREISSVSYMGDFQARRAMIRYRDDNNEVKFTHTMNGSGLAIDRLIAAILENYQNSDGTVSIPKKLIPYFGSDKIAY.

231–233 contributes to the L-serine binding site; sequence TAE. Position 261–263 (261–263) interacts with ATP; the sequence is RSE. Glutamate 284 contacts L-serine. 348 to 351 provides a ligand contact to ATP; the sequence is EISS. Serine 383 is an L-serine binding site.

Belongs to the class-II aminoacyl-tRNA synthetase family. Type-1 seryl-tRNA synthetase subfamily. As to quaternary structure, homodimer. The tRNA molecule binds across the dimer.

It is found in the cytoplasm. The catalysed reaction is tRNA(Ser) + L-serine + ATP = L-seryl-tRNA(Ser) + AMP + diphosphate + H(+). It carries out the reaction tRNA(Sec) + L-serine + ATP = L-seryl-tRNA(Sec) + AMP + diphosphate + H(+). The protein operates within aminoacyl-tRNA biosynthesis; selenocysteinyl-tRNA(Sec) biosynthesis; L-seryl-tRNA(Sec) from L-serine and tRNA(Sec): step 1/1. Its function is as follows. Catalyzes the attachment of serine to tRNA(Ser). Is also able to aminoacylate tRNA(Sec) with serine, to form the misacylated tRNA L-seryl-tRNA(Sec), which will be further converted into selenocysteinyl-tRNA(Sec). The protein is Serine--tRNA ligase of Mycoplasmopsis agalactiae (strain NCTC 10123 / CIP 59.7 / PG2) (Mycoplasma agalactiae).